A 103-amino-acid chain; its full sequence is ATP synthase subunit H, mitochondrial (103 aa).

The N-terminal 26 residues, 1–26 (MSRILKSLSRSYSTTSPRLYVDVVQG), are a transit peptide targeting the mitochondrion.

Belongs to the ATPase h subunit family. In terms of assembly, F-type ATPases have 2 components, CF(1) - the catalytic core - and CF(0) - the membrane proton channel.

It localises to the mitochondrion. The protein localises to the mitochondrion inner membrane. Mitochondrial membrane ATP synthase (F(1)F(0) ATP synthase or Complex V) produces ATP from ADP in the presence of a proton gradient across the membrane which is generated by electron transport complexes of the respiratory chain. F-type ATPases consist of two structural domains, F(1) - containing the extramembraneous catalytic core and F(0) - containing the membrane proton channel, linked together by a central stalk and a peripheral stalk. During catalysis, ATP synthesis in the catalytic domain of F(1) is coupled via a rotary mechanism of the central stalk subunits to proton translocation. Part of the complex F(0) domain. Minor subunit located with subunit a in the membrane. This is ATP synthase subunit H, mitochondrial (atp14) from Schizosaccharomyces pombe (strain 972 / ATCC 24843) (Fission yeast).